The following is a 209-amino-acid chain: Ribosomal RNA large subunit methyltransferase E (209 aa).

S-adenosyl-L-methionine contacts are provided by G63, W65, D83, D99, and D124. K164 (proton acceptor) is an active-site residue.

This sequence belongs to the class I-like SAM-binding methyltransferase superfamily. RNA methyltransferase RlmE family.

It localises to the cytoplasm. It catalyses the reaction uridine(2552) in 23S rRNA + S-adenosyl-L-methionine = 2'-O-methyluridine(2552) in 23S rRNA + S-adenosyl-L-homocysteine + H(+). Specifically methylates the uridine in position 2552 of 23S rRNA at the 2'-O position of the ribose in the fully assembled 50S ribosomal subunit. The polypeptide is Ribosomal RNA large subunit methyltransferase E (Shewanella denitrificans (strain OS217 / ATCC BAA-1090 / DSM 15013)).